Consider the following 133-residue polypeptide: Large ribosomal subunit protein bL17 (133 aa).

The protein belongs to the bacterial ribosomal protein bL17 family. In terms of assembly, part of the 50S ribosomal subunit. Contacts protein L32.

This Idiomarina loihiensis (strain ATCC BAA-735 / DSM 15497 / L2-TR) protein is Large ribosomal subunit protein bL17.